We begin with the raw amino-acid sequence, 205 residues long: Holliday junction branch migration complex subunit RuvA (205 aa).

The segment at 1–64 (MIGKLKGSIE…EDQLKLFGFV (64 aa)) is domain I. Positions 65 to 143 (SALEREWFNL…AFAGDASASI (79 aa)) are domain II. The segment at 144 to 153 (GLKQELGEGV) is flexible linker. The domain III stretch occupies residues 153–205 (VASAPVADAVSALTNLGYSRDQAANAVAAALKNGGEGGDSAKLIRLGLKELSR).

It belongs to the RuvA family. Homotetramer. Forms an RuvA(8)-RuvB(12)-Holliday junction (HJ) complex. HJ DNA is sandwiched between 2 RuvA tetramers; dsDNA enters through RuvA and exits via RuvB. An RuvB hexamer assembles on each DNA strand where it exits the tetramer. Each RuvB hexamer is contacted by two RuvA subunits (via domain III) on 2 adjacent RuvB subunits; this complex drives branch migration. In the full resolvosome a probable DNA-RuvA(4)-RuvB(12)-RuvC(2) complex forms which resolves the HJ.

Its subcellular location is the cytoplasm. Functionally, the RuvA-RuvB-RuvC complex processes Holliday junction (HJ) DNA during genetic recombination and DNA repair, while the RuvA-RuvB complex plays an important role in the rescue of blocked DNA replication forks via replication fork reversal (RFR). RuvA specifically binds to HJ cruciform DNA, conferring on it an open structure. The RuvB hexamer acts as an ATP-dependent pump, pulling dsDNA into and through the RuvAB complex. HJ branch migration allows RuvC to scan DNA until it finds its consensus sequence, where it cleaves and resolves the cruciform DNA. The polypeptide is Holliday junction branch migration complex subunit RuvA (Agrobacterium fabrum (strain C58 / ATCC 33970) (Agrobacterium tumefaciens (strain C58))).